The primary structure comprises 1579 residues: Eukaryotic translation initiation factor 4 gamma 3 (1579 aa).

Disordered regions lie at residues 1–35 and 128–326; these read MNSQ…RPGV and TQQQ…GPSL. Residues 10 to 25 show a composition bias toward low complexity; that stretch reads PFFQRPQIQPPRAAIP. Positions 26–35 are enriched in polar residues; sequence NSSPSIRPGV. A PABPC1-binding region spans residues 134–162; the sequence is PAKREKKTIRIRDPNQGGKDITEEIMSGG. The segment covering 167 to 183 has biased composition (pro residues); the sequence is PTPPIGRPASTPTPPQQ. A Phosphothreonine modification is found at threonine 168. Residues serine 230, serine 232, and serine 267 each carry the phosphoserine modification. Residues 266-292 show a composition bias toward low complexity; the sequence is SSPTSLPPLARSSLPSPMSAALSSQPL. Over residues 295-308 the composition is skewed to basic and acidic residues; that stretch reads AEDKCELPSSKEED. Positions 315-326 are enriched in polar residues; it reads PTSCTAASGPSL. A phosphoserine mark is found at serine 436, serine 470, serine 472, and serine 490. Residues 454-470 are compositionally biased toward basic and acidic residues; that stretch reads RTCLSKDAKEMQDKAES. 3 disordered regions span residues 454 to 615, 681 to 706, and 724 to 744; these read RTCL…DTEG, RQTP…QRRE, and AENA…PESI. Acidic residues predominate over residues 471–480; it reads ESDGQAEETA. The span at 481-501 shows a compositional bias: polar residues; the sequence is DPQSLHSGRSPAPVQTATTAP. 2 stretches are compositionally biased toward basic and acidic residues: residues 506–515 and 549–563; these read KTKEQTRTPD and SERD…KAEE. Low complexity predominate over residues 589 to 598; the sequence is SGSADSSADG. Positions 606–615 are enriched in basic and acidic residues; that stretch reads ESWKPADTEG. The EIF4E-binding stretch occupies residues 614-625; the sequence is EGKKQYDREFLL. Residues 694–1014 are eIF3/EIF4A-binding; it reads VGPRRSQPGQ…EQRKVQQLMT (321 aa). 5 HEAT repeats span residues 740 to 778, 779 to 826, 827 to 900, 901 to 939, and 940 to 979; these read DPES…LTVD, TEER…GNTV, NFRK…LKML, TEAI…DFEK, and AKPR…LCNW. Residues 750-978 form the MIF4G domain; sequence FRKVRSILNK…QDVIDLRLCN (229 aa). A compositionally biased stretch (basic and acidic residues) spans 855–871; it reads KELEAASAPEERTRLHD. The interval 855-875 is disordered; it reads KELEAASAPEERTRLHDELEE. The stretch at 989–1018 forms a coiled coil; sequence KTIEQIHKEAKIEEQEEQRKVQQLMTKEKR. Disordered stretches follow at residues 1009-1037 and 1067-1214; these read VQQL…QGAK and LGSW…LSEE. Residues 1086–1098 show a composition bias toward low complexity; the sequence is LRSSASSLNRFSP. Serine 1150 carries the phosphoserine; by CaMK1 modification. Basic and acidic residues-rich tracts occupy residues 1150-1169 and 1179-1197; these read SSKD…EMLE and DAER…ELAK. A coiled-coil region spans residues 1154–1176; the sequence is LLDNQSQEEQRREMLETVKQLTG. A Phosphoserine modification is found at serine 1212. Positions 1215 to 1337 constitute an MI domain; the sequence is EVERKSKSII…SMRELIVEFS (123 aa). A coiled-coil region spans residues 1406–1438; it reads SSEALSKKELSAEELSQRLEKLIMEEKADDERI. Positions 1410-1579 constitute a W2 domain; the sequence is LSKKELSAEE…REAEEESEDN (170 aa). The tract at residues 1427–1579 is EIF4A-binding; sequence LIMEEKADDE…REAEEESEDN (153 aa). The interval 1565–1579 is necessary but not sufficient for MKNK1-binding; the sequence is FFTWLREAEEESEDN.

Belongs to the eukaryotic initiation factor 4G family. Interacts with EIF4A, EIF4E, eIF3 and PABPC1. Part of a complex with EIF4E. eIF4F is a multi-subunit complex, the composition of which varies with external and internal environmental conditions. It is composed of at least EIF4A, EIF4E and EIF4G1/EIF4G3. EIF4G1/EIF4G3 interacts through its C-terminus with the serine/threonine kinases MKNK1, and with MKNK2. Appears to act as a scaffold protein, holding these enzymes in place to phosphorylate eIF4E. Non-phosphorylated EIF4EBP1 competes with EIF4G1/EIFG3 to interact with EIF4E; insulin stimulated MAP-kinase (MAPK1 and MAPK3) phosphorylation of EIF4EBP1 causes dissociation of the complex allowing EIF4G1/EIF4G3 to bind and consequent initiation of translation. EIF4G1/EIF4G3 interacts with PABPC1 to bring about circularization of the mRNA. Interacts with FXR1; promoting translation of FXR1 target mRNAs.

Functionally, component of the protein complex eIF4F, which is involved in the recognition of the mRNA cap, ATP-dependent unwinding of 5'-terminal secondary structure and recruitment of mRNA to the ribosome. Functional homolog of EIF4G1. The polypeptide is Eukaryotic translation initiation factor 4 gamma 3 (Eif4g3) (Mus musculus (Mouse)).